A 233-amino-acid polypeptide reads, in one-letter code: Phosphatidylserine decarboxylase proenzyme (233 aa).

The Schiff-base intermediate with substrate; via pyruvic acid role is filled by Ser-188. Pyruvic acid (Ser); by autocatalysis is present on Ser-188.

The protein belongs to the phosphatidylserine decarboxylase family. PSD-A subfamily. In terms of assembly, heterodimer of a large membrane-associated beta subunit and a small pyruvoyl-containing alpha subunit. Requires pyruvate as cofactor. Post-translationally, is synthesized initially as an inactive proenzyme. Formation of the active enzyme involves a self-maturation process in which the active site pyruvoyl group is generated from an internal serine residue via an autocatalytic post-translational modification. Two non-identical subunits are generated from the proenzyme in this reaction, and the pyruvate is formed at the N-terminus of the alpha chain, which is derived from the carboxyl end of the proenzyme. The post-translation cleavage follows an unusual pathway, termed non-hydrolytic serinolysis, in which the side chain hydroxyl group of the serine supplies its oxygen atom to form the C-terminus of the beta chain, while the remainder of the serine residue undergoes an oxidative deamination to produce ammonia and the pyruvoyl prosthetic group on the alpha chain.

The protein resides in the cell membrane. It catalyses the reaction a 1,2-diacyl-sn-glycero-3-phospho-L-serine + H(+) = a 1,2-diacyl-sn-glycero-3-phosphoethanolamine + CO2. The protein operates within phospholipid metabolism; phosphatidylethanolamine biosynthesis; phosphatidylethanolamine from CDP-diacylglycerol: step 2/2. In terms of biological role, catalyzes the formation of phosphatidylethanolamine (PtdEtn) from phosphatidylserine (PtdSer). The sequence is that of Phosphatidylserine decarboxylase proenzyme from Ruegeria sp. (strain TM1040) (Silicibacter sp.).